The chain runs to 307 residues: Probable RuBisCO transcriptional regulator (307 aa).

Residues phenylalanine 5–threonine 62 enclose the HTH lysR-type domain. The H-T-H motif DNA-binding region spans phenylalanine 22 to lysine 41.

Belongs to the LysR transcriptional regulatory family.

The protein localises to the plastid. It is found in the chloroplast. Functionally, trans-acting transcriptional regulator of RuBisCO genes (rbcL and rbcS) expression. The chain is Probable RuBisCO transcriptional regulator (rbcR-A) from Thalassiosira pseudonana (Marine diatom).